The chain runs to 2515 residues: Nonribosomal peptide synthetase tpzA (2515 aa).

The segment at 246 to 648 is adenylation 1; that stretch reads ELATRQPGAQ…GRMGTQVKLR (403 aa). The 74-residue stretch at 794–867 folds into the Carrier 1 domain; sequence SEVEHLIHAI…DMATVALKTS (74 aa). O-(pantetheine 4'-phosphoryl)serine is present on S828. The tract at residues 924–1332 is condensation 1; it reads DAYPCSPLQE…IRSVPHITPE (409 aa). Residues 1357–1758 form an adenylation 2 region; the sequence is RKQSQETPSA…GRMNDQIKLR (402 aa). A Carrier 2 domain is found at 1900 to 1976; the sequence is LATTNEERTL…AILSHLTGRK (77 aa). S1937 is modified (O-(pantetheine 4'-phosphoryl)serine). Residues 2013-2431 are condensation 2; sequence VEDIYPCGPI…LGILPPEEQK (419 aa). A Carrier 3 domain is found at 2436 to 2512; the sequence is PSLSAAVVRL…AMARRSLVVS (77 aa). Position 2473 is an O-(pantetheine 4'-phosphoryl)serine (S2473).

Belongs to the NRP synthetase family.

It participates in secondary metabolite biosynthesis. Its function is as follows. Nonribosomal peptide synthetase; part of the gene cluster that mediates the biosynthesis of terreazepine,. The first step of terreazepine biosynthesis is catalyzed by the indoleamine 2,3-dioxygenase tpzB which produces N-formyl-kynurenine through the catabolism of tryptophan. The two-module NRPS tpzA then utilizes anthranilate and kynurenine to assemble terreazepine. The first adenylation domain of tpzA (A1) loads anthranilate onto the T1 domain, while A2 loads kynurenine, generated through spontaneous nonenzymatic deformylation of the tzpB-supplied N-formyl-kynurenine. TpzA produces a 2:1 mixture of S-R enantiomers, which suggests that the A2 domain accepts both D- and L-kynurenine. The peptide bond formation between the tethered amino acids is catalyzed by the first condensation domain (C1) between anthranilate's carbonyl carbon and kynurenine's aliphatic primary amine. The second C domain (C2) catalyzes the final cyclization event between the aromatic amine of kynurenine and the tethered carbonyl carbon, yielding the final terreazepine product. The T3 domain may facilitate the interaction with downstream tailoring enzymes. This chain is Nonribosomal peptide synthetase tpzA, found in Aspergillus terreus (strain NIH 2624 / FGSC A1156).